We begin with the raw amino-acid sequence, 86 residues long: Putative pro-MCH-like protein 1 (86 aa).

Residues 31–49 (GSVAFPAENGVQDTESTQE) form an NGE-like region. The disordered stretch occupies residues 38–62 (ENGVQDTESTQEKRETGDEENSAKF). Positions 52–64 (ETGDEENSAKFPV) are NEI-like. Residues 68–86 (DFDTLSCMLGRVYQSCWQV) are melanin-concentrating hormone-like.

The protein belongs to the melanin-concentrating hormone family. In terms of tissue distribution, expressed in testis and brain.

The polypeptide is Putative pro-MCH-like protein 1 (PMCHL1) (Homo sapiens (Human)).